A 244-amino-acid polypeptide reads, in one-letter code: Flavin-dependent thymidylate synthase (244 aa).

In terms of domain architecture, ThyX spans 7-199 (PRVFLIASWG…PNLARLVWED (193 aa)). FAD contacts are provided by residues serine 60 and 83 to 85 (RHR). Residues 80 to 83 (QFIR), 93 to 95 (SQR), and arginine 137 each bind dUMP. Positions 83–93 (RHRMASYWSES) match the ThyX motif motif. Residues 153-155 (NAR) and asparagine 160 each bind FAD. Residue arginine 165 coordinates dUMP. Residue arginine 165 is the Involved in ionization of N3 of dUMP, leading to its activation of the active site.

Belongs to the thymidylate synthase ThyX family. Homotetramer. It depends on FAD as a cofactor.

It catalyses the reaction dUMP + (6R)-5,10-methylene-5,6,7,8-tetrahydrofolate + NADPH + H(+) = dTMP + (6S)-5,6,7,8-tetrahydrofolate + NADP(+). It participates in pyrimidine metabolism; dTTP biosynthesis. Its function is as follows. Catalyzes the reductive methylation of 2'-deoxyuridine-5'-monophosphate (dUMP) to 2'-deoxythymidine-5'-monophosphate (dTMP) while utilizing 5,10-methylenetetrahydrofolate (mTHF) as the methyl donor, and NADPH and FADH(2) as the reductant. This is Flavin-dependent thymidylate synthase from Pyrobaculum aerophilum (strain ATCC 51768 / DSM 7523 / JCM 9630 / CIP 104966 / NBRC 100827 / IM2).